Here is an 838-residue protein sequence, read N- to C-terminus: Translation initiation factor IF-2 (838 aa).

Disordered stretches follow at residues 30-60 (PHTA…KVEE) and 94-254 (QRSP…PTGP). Composition is skewed to basic and acidic residues over residues 33–43 (AAEEHVSDSEK) and 96–136 (SPEE…EARR). The span at 137–173 (QPAPVAEPVAAQAAAPAPAPVVEPVQEAPVATAAPAA) shows a compositional bias: low complexity. 2 stretches are compositionally biased toward basic and acidic residues: residues 174–214 (DARK…EKAP) and 222–231 (TTDEESDGFR). Over residues 232 to 245 (RGGRGKAKLKKRNA) the composition is skewed to basic residues. A tr-type G domain is found at 338–507 (ARAPVVTVMG…LLQAEVLELK (170 aa)). The G1 stretch occupies residues 347 to 354 (GHVDHGKT). GTP is bound at residue 347–354 (GHVDHGKT). The G2 stretch occupies residues 372 to 376 (GITQH). The tract at residues 393–396 (DTPG) is G3. GTP is bound by residues 393-397 (DTPGH) and 447-450 (NKID). A G4 region spans residues 447 to 450 (NKID). The segment at 483-485 (SAK) is G5.

This sequence belongs to the TRAFAC class translation factor GTPase superfamily. Classic translation factor GTPase family. IF-2 subfamily.

The protein resides in the cytoplasm. In terms of biological role, one of the essential components for the initiation of protein synthesis. Protects formylmethionyl-tRNA from spontaneous hydrolysis and promotes its binding to the 30S ribosomal subunits. Also involved in the hydrolysis of GTP during the formation of the 70S ribosomal complex. The sequence is that of Translation initiation factor IF-2 from Pseudomonas fluorescens (strain ATCC BAA-477 / NRRL B-23932 / Pf-5).